Consider the following 63-residue polypeptide: MAKRCEVCGKGVVSGVQYSHSHRQSKRRWAPNIKSVRAVVNGVPKKVSVCTRCLRSGKVQRAI.

It belongs to the bacterial ribosomal protein bL28 family.

This chain is Large ribosomal subunit protein bL28, found in Clostridium novyi (strain NT).